The following is a 103-amino-acid chain: Histone H4 (103 aa).

Over residues 1-14 (MSGRGKGGKGLGKG) the composition is skewed to gly residues. Residues 1–20 (MSGRGKGGKGLGKGGAKRHR) form a disordered region. S2 bears the N-acetylserine mark. A Phosphoserine modification is found at S2. At R4 the chain carries Asymmetric dimethylarginine; by PRMT1; alternate. Residue R4 is modified to Citrulline; alternate. R4 is modified (omega-N-methylarginine; by PRMT1; alternate). R4 carries the symmetric dimethylarginine; by PRMT5 and PRMT7; alternate modification. Residues K6, K9, K13, and K17 each carry the N6-(2-hydroxyisobutyryl)lysine; alternate modification. K6 carries the post-translational modification N6-acetyl-N6-methyllysine; alternate. K6, K9, K13, and K17 each carry N6-acetyllysine. An N6-butyryllysine; alternate mark is found at K6, K9, K13, and K17. K6 is modified (N6-glutaryllysine; alternate). N6-lactoyllysine; alternate is present on residues K6, K9, K13, and K17. N6-propionyllysine; alternate is present on K9. K13 bears the N6-acetyl-N6-methyllysine; alternate mark. N6-glutaryllysine; alternate is present on K13. N6-methyllysine; alternate is present on K13. K17 carries the post-translational modification N6-propionyllysine; alternate. The DNA-binding element occupies 17–21 (KRHRK). K21 carries the post-translational modification N6-methyllysine; alternate. K21 is subject to N6,N6,N6-trimethyllysine; alternate. An N6,N6-dimethyllysine; alternate modification is found at K21. K21 carries the N6-methylated lysine modification. 2 positions are modified to N6-(2-hydroxyisobutyryl)lysine; alternate: K32 and K45. Position 32 is an N6-acetyllysine (K32). Residues K32 and K45 each carry the N6-butyryllysine; alternate modification. K32 bears the N6-glutaryllysine; alternate mark. K32 is subject to N6-lactoyllysine; alternate. 2 positions are modified to N6-propionyllysine; alternate: K32 and K45. An N6-succinyllysine; alternate modification is found at K32. A Glycyl lysine isopeptide (Lys-Gly) (interchain with G-Cter in UFM1); alternate cross-link involves residue K32. At S48 the chain carries Phosphoserine; by PAK2. The residue at position 52 (Y52) is a Phosphotyrosine. The residue at position 60 (K60) is an N6-acetyllysine. K60, K78, and K80 each carry N6-glutaryllysine; alternate. At K60 the chain carries N6-(2-hydroxyisobutyryl)lysine. N6-(2-hydroxyisobutyryl)lysine; alternate is present on residues K78 and K80. An N6-butyryllysine; alternate mark is found at K78 and K80. K78 bears the N6-lactoyllysine; alternate mark. An N6-propionyllysine; alternate mark is found at K78 and K80. K78 is modified (N6-succinyllysine). K80 is subject to N6-acetyllysine. The residue at position 89 (Y89) is a Phosphotyrosine. K92 carries the post-translational modification N6-(2-hydroxyisobutyryl)lysine; alternate. K92 carries the post-translational modification N6-butyryllysine; alternate. K92 is modified (N6-glutaryllysine; alternate). Residue K92 is modified to N6-lactoyllysine; alternate. At K92 the chain carries N6-propionyllysine; alternate. K92 carries the post-translational modification N6-succinyllysine; alternate. At K92 the chain carries N6-acetyllysine; alternate. K92 participates in a covalent cross-link: Glycyl lysine isopeptide (Lys-Gly) (interchain with G-Cter in ubiquitin); alternate.

This sequence belongs to the histone H4 family. The nucleosome is a histone octamer containing two molecules each of H2A, H2B, H3 and H4 assembled in one H3-H4 heterotetramer and two H2A-H2B heterodimers. The octamer wraps approximately 147 bp of DNA. Acetylation at Lys-6 (H4K5ac), Lys-9 (H4K8ac), Lys-13 (H4K12ac) and Lys-17 (H4K16ac) occurs in coding regions of the genome but not in heterochromatin. In terms of processing, citrullination at Arg-4 (H4R3ci) by PADI4 impairs methylation. Post-translationally, monomethylation and asymmetric dimethylation at Arg-4 (H4R3me1 and H4R3me2a, respectively) by PRMT1 favors acetylation at Lys-9 (H4K8ac) and Lys-13 (H4K12ac). Demethylation is performed by JMJD6. Symmetric dimethylation on Arg-4 (H4R3me2s) by the PRDM1/PRMT5 complex may play a crucial role in the germ-cell lineage. Monomethylated, dimethylated or trimethylated at Lys-21 (H4K20me1, H4K20me2, H4K20me3). Monomethylation is performed by KMT5A/SET8. Trimethylation is performed by KMT5B and KMT5C and induces gene silencing. Monomethylated at Lys-13 (H4K12me1) by N6AMT1; H4K12me1 modification is present at the promoters of numerous genes encoding cell cycle regulators. In terms of processing, acetyl-methylated at Lys-6 and Lys-13 (H4K5acme and H4K12acme, respectively), acetyl-methylation is an epigenetic mark of active chromatin associated with increased transcriptional initiation. Acetyl-methylation is formed by acetylation by EP300/p300 of lysine residues that are already monomethylated on the same side chain. H4K5acme and H4K12acme marks specifically bind BRD2. Post-translationally, phosphorylated by pak2 at Ser-48 (H4S47ph). This phosphorylation increases the association of H3.3-H4 with the histone chaperone HIRA, thus promoting nucleosome assembly of H3.3-H4 and inhibiting nucleosome assembly of H3.1-H4. Ubiquitinated by the CUL4-DDB-RBX1 complex in response to ultraviolet irradiation. This may weaken the interaction between histones and DNA and facilitate DNA accessibility to repair proteins. Monoubiquitinated at Lys-92 of histone H4 (H4K91ub1) in response to DNA damage. The exact role of H4K91ub1 in DNA damage response is still unclear but it may function as a licensing signal for additional histone H4 post-translational modifications such as H4 Lys-21 methylation (H4K20me). In terms of processing, sumoylated, which is associated with transcriptional repression. Post-translationally, butyrylation of histones marks active promoters and competes with histone acetylation. Glutarylation at Lys-92 (H4K91glu) destabilizes nucleosomes by promoting dissociation of the H2A-H2B dimers from nucleosomes. In terms of processing, ufmylated; monofmylated by UFL1 at Lys-32 (H4K31Ufm1) in response to DNA damage. Post-translationally, lactylated in macrophages by EP300/P300 by using lactoyl-CoA directly derived from endogenous or exogenous lactate, leading to stimulates gene transcription. Delactylated by SIRT3 at Lys-17 (H4K16la).

It is found in the nucleus. Its subcellular location is the chromosome. Functionally, core component of nucleosome. Nucleosomes wrap and compact DNA into chromatin, limiting DNA accessibility to the cellular machineries which require DNA as a template. Histones thereby play a central role in transcription regulation, DNA repair, DNA replication and chromosomal stability. DNA accessibility is regulated via a complex set of post-translational modifications of histones, also called histone code, and nucleosome remodeling. This chain is Histone H4, found in Xenopus laevis (African clawed frog).